A 275-amino-acid chain; its full sequence is Phosphonoacetaldehyde hydrolase (275 aa).

Residue D15 is the Nucleophile of the active site. Mg(2+)-binding residues include D15 and A17. The active-site Schiff-base intermediate with substrate is the K56. D189 serves as a coordination point for Mg(2+).

It belongs to the HAD-like hydrolase superfamily. PhnX family. Homodimer. It depends on Mg(2+) as a cofactor.

The catalysed reaction is phosphonoacetaldehyde + H2O = acetaldehyde + phosphate + H(+). Functionally, involved in phosphonate degradation. In Pseudomonas putida (Arthrobacter siderocapsulatus), this protein is Phosphonoacetaldehyde hydrolase.